Here is a 418-residue protein sequence, read N- to C-terminus: Phosphoglycerate kinase (418 aa).

The (2R)-3-phosphoglycerate site is built by Val24, Asp25, Phe26, Asn27, Arg40, Ser63, His64, Gly66, Arg67, Leu122, Arg123, His169, and Arg170. Gly213 serves as a coordination point for ADP. CDP is bound at residue Gly213. 2 residues coordinate AMP: Ala214 and Lys215. Ala214 lines the ATP pocket. Residue Ala214 coordinates Mg(2+). The Mg(2+) site is built by Ala217 and Asp218. Asp218 serves as a coordination point for CDP. Lys219 is an AMP binding site. Lys219 provides a ligand contact to ATP. Residue Gly237 coordinates ADP. Residue Gly237 coordinates CDP. The AMP site is built by Gly238 and Gly312. ATP-binding residues include Gly238 and Gly312. The CDP site is built by Gly337 and Phe342. Residue Phe342 coordinates ADP. Residue Glu343 participates in AMP binding. Glu343, Asp374, and Thr375 together coordinate ATP. Residue Asp374 coordinates Mg(2+).

This sequence belongs to the phosphoglycerate kinase family. In terms of assembly, monomer. The cofactor is Mg(2+).

The enzyme catalyses (2R)-3-phosphoglycerate + ATP = (2R)-3-phospho-glyceroyl phosphate + ADP. Its pathway is carbohydrate degradation; glycolysis; pyruvate from D-glyceraldehyde 3-phosphate: step 2/5. This is Phosphoglycerate kinase (PGK) from Euplotes crassus.